The following is a 272-amino-acid chain: Formamidopyrimidine-DNA glycosylase (272 aa).

Catalysis depends on proline 2, which acts as the Schiff-base intermediate with DNA. The active-site Proton donor is the glutamate 3. The Proton donor; for beta-elimination activity role is filled by lysine 56. The DNA site is built by histidine 89, arginine 108, and lysine 149. The FPG-type zinc finger occupies 234–268 (LAYGRAGEMCVNCETPLENLKLGQRASVFCPQCQP). The active-site Proton donor; for delta-elimination activity is the arginine 258.

Belongs to the FPG family. Monomer. It depends on Zn(2+) as a cofactor.

It catalyses the reaction Hydrolysis of DNA containing ring-opened 7-methylguanine residues, releasing 2,6-diamino-4-hydroxy-5-(N-methyl)formamidopyrimidine.. The catalysed reaction is 2'-deoxyribonucleotide-(2'-deoxyribose 5'-phosphate)-2'-deoxyribonucleotide-DNA = a 3'-end 2'-deoxyribonucleotide-(2,3-dehydro-2,3-deoxyribose 5'-phosphate)-DNA + a 5'-end 5'-phospho-2'-deoxyribonucleoside-DNA + H(+). Functionally, involved in base excision repair of DNA damaged by oxidation or by mutagenic agents. Acts as a DNA glycosylase that recognizes and removes damaged bases. Has a preference for oxidized purines, such as 7,8-dihydro-8-oxoguanine (8-oxoG). Has AP (apurinic/apyrimidinic) lyase activity and introduces nicks in the DNA strand. Cleaves the DNA backbone by beta-delta elimination to generate a single-strand break at the site of the removed base with both 3'- and 5'-phosphates. The sequence is that of Formamidopyrimidine-DNA glycosylase from Acinetobacter baylyi (strain ATCC 33305 / BD413 / ADP1).